The sequence spans 289 residues: (+)-kolavelool synthase (289 aa).

The protein belongs to the diterpene synthase family.

The enzyme catalyses (+)-kolavenyl diphosphate + H2O = (+)-kolavelool + diphosphate. Functionally, involved in the biosynthesis of (+)-O-methylkolavelool. Catalyzes the biosynthesis of (+)-kolavelool from (+)-kolavenyl diphosphate via the release of the diphosphate moiety through the nucleophilic addition of a water molecule. This Herpetosiphon aurantiacus (strain ATCC 23779 / DSM 785 / 114-95) protein is (+)-kolavelool synthase.